Here is a 2087-residue protein sequence, read N- to C-terminus: Rho GTPase-activating protein 32 (2087 aa).

In terms of domain architecture, PX; atypical spans 131–245; that stretch reads GSIQLSLSEE…LTWMEIDNKG (115 aa). An SH3 domain is found at 259–321; the sequence is PAVGAAHVIK…PGHCVELINQ (63 aa). The 196-residue stretch at 372–567 folds into the Rho-GAP domain; the sequence is CDLGEHLLNS…FILNHVDVLF (196 aa). 4 positions are modified to phosphoserine: Ser-706, Ser-709, Ser-732, and Ser-738. Residues 818 to 858 form a disordered region; the sequence is FLDSPGYSKDKPSANKKDAETGSSQCQTPGSTASSEPVSPL. Over residues 825 to 837 the composition is skewed to basic and acidic residues; sequence SKDKPSANKKDAE. Residues 838–854 are compositionally biased toward polar residues; that stretch reads TGSSQCQTPGSTASSEP. A phosphoserine mark is found at Ser-852, Ser-856, and Ser-892. Low complexity predominate over residues 927 to 938; that stretch reads SNTTAQNASSST. 3 disordered regions span residues 927 to 1038, 1103 to 1143, and 1169 to 1257; these read SNTT…PPKN, PAEQ…EQHH, and VPLD…ENTS. Residue Ser-952 is modified to Phosphoserine. 2 stretches are compositionally biased toward low complexity: residues 994-1005 and 1019-1029; these read SVSSSQSKAVAS and QDSVPVSSVSL. Polar residues predominate over residues 1124 to 1138; sequence TTATGDPTHSNTTES. Over residues 1172-1182 the composition is skewed to basic and acidic residues; that stretch reads DSEKSDDHVSF. Residues 1188–1203 are compositionally biased toward polar residues; the sequence is GKNSMPTVSFLDQDQS. Ser-1203 carries the phosphoserine modification. Residues 1222–1232 show a composition bias toward basic and acidic residues; that stretch reads DKLHHPLEFAD. Residues 1391–1711 are interaction with GAB2; the sequence is RVPLLHLRAE…YSYAGLAPRP (321 aa). Asymmetric dimethylarginine occurs at positions 1523 and 1533. Ser-1585 is subject to Phosphoserine. The interval 1685-2087 is interaction with FYN; it reads PNRDFAFYNP…QHPETQIHAE (403 aa). The segment at 1798–1896 is disordered; sequence PGKTGLLSVA…QFCESKNGPP (99 aa). Residues 1823–1838 show a composition bias toward basic and acidic residues; the sequence is GEDRFYRRHPEAEMDR. Over residues 1847 to 1862 the composition is skewed to polar residues; sequence STQPEKPSLPQKQSSL. A compositionally biased stretch (basic and acidic residues) spans 1875–1889; that stretch reads PEHRAHQEASHRQFC. The residue at position 2037 (Arg-2037) is an Omega-N-methylarginine.

This sequence belongs to the PX domain-containing GAP family. Interacts with NTRK1 (via cytoplasmic domain); the interaction is independent of the phosphorylation state of NTRK1. Interacts with SHC3 (via SH2 domain). Interacts with RASA1 (via SH3 domain); the interaction is necessary for the Ras activation and cell transforming activities of ARHGAP32. Interacts with GAB1 and GAB2. Interacts with CRK and CRKL. Found in a complex with CRKL and BCAR1; upon EGF stimulation BCAR1 may be replaced by EGFR. Interacts with NCK1 (via SH3 domain); NCK1 recruits phosphorylated BCAR1 to the complex. Isoform 2 interacts with FYN; the interaction appears to be dependent on tyrosine phosphorylation of ARHGAP32. Interacts with EGFR; the interaction requires EGF stimulation and is increased by SHC3. Interacts with CDC42; the interaction requires constitutively active CDC42. Interacts with CTNNB1. Interacts with GRIN2B. Interacts with DLG4 and CDH2. Interacts with GPHN. Post-translationally, isoform 2 is phosphorylated on multiple tyrosine residues by FYN. Phosphorylated tyrosine residues undergo dephosphorylation after stimulation of NMDA receptors. Phosphorylated in vitro by CaMK2 in the presence of calmodulin and calcium; which inhibits GAP activity. Isoform 1 and isoform 2 are highly expressed in brain and testis. Isoform 1 is also expressed in other tissues such as lung, liver and spleen.

It localises to the postsynaptic density. The protein localises to the cell projection. It is found in the dendritic spine. Its subcellular location is the cytoplasm. The protein resides in the cell cortex. It localises to the endosome membrane. The protein localises to the golgi apparatus membrane. It is found in the endoplasmic reticulum membrane. Its subcellular location is the membrane. In terms of biological role, GTPase-activating protein (GAP) promoting GTP hydrolysis on RHOA, CDC42 and RAC1 small GTPases. May be involved in the differentiation of neuronal cells during the formation of neurite extensions. Involved in NMDA receptor activity-dependent actin reorganization in dendritic spines. May mediate cross-talks between Ras- and Rho-regulated signaling pathways in cell growth regulation. Isoform 2 has higher GAP activity. The protein is Rho GTPase-activating protein 32 (ARHGAP32) of Homo sapiens (Human).